We begin with the raw amino-acid sequence, 267 residues long: GTP cyclohydrolase FolE2 (267 aa).

It belongs to the GTP cyclohydrolase IV family.

It carries out the reaction GTP + H2O = 7,8-dihydroneopterin 3'-triphosphate + formate + H(+). Its pathway is cofactor biosynthesis; 7,8-dihydroneopterin triphosphate biosynthesis; 7,8-dihydroneopterin triphosphate from GTP: step 1/1. Converts GTP to 7,8-dihydroneopterin triphosphate. This chain is GTP cyclohydrolase FolE2, found in Nitrosomonas eutropha (strain DSM 101675 / C91 / Nm57).